A 142-amino-acid polypeptide reads, in one-letter code: Large ribosomal subunit protein bL17 (142 aa).

This sequence belongs to the bacterial ribosomal protein bL17 family. In terms of assembly, part of the 50S ribosomal subunit. Contacts protein L32.

The protein is Large ribosomal subunit protein bL17 of Protochlamydia amoebophila (strain UWE25).